Here is a 307-residue protein sequence, read N- to C-terminus: MSEIGTGFPFDPHYVEVLGERMHYVDVGPRDGTPVLFLHGNPTSSYLWRNIIPHVAPSHRCIAPDLIGMGKSDKPDLDYFFDDHVRYLDAFIEALGLEEVVLVIHDWGSALGFHWAKRNPERVKGIACMEFIRPIPTWDEWPEFARETFQAFRTADVGRELIIDQNAFIEGALPKFVVRPLTEVEMDHYREPFLKPVDREPLWRFPNELPIAGEPANIVALVEAYMNWLHQSPVPKLLFWGTPGVLISPAEAARLAESLPNCKTVDIGPGLHFLQEDNPDLIGSEIARWLPALIVGKSIEFDGGWAT.

In terms of domain architecture, AB hydrolase-1 spans 34–158; the sequence is PVLFLHGNPT…FQAFRTADVG (125 aa). The active-site Nucleophile is the aspartate 106. Glutamate 130 (proton donor) is an active-site residue. The active-site Proton acceptor is histidine 272.

It belongs to the haloalkane dehalogenase family. Type 2 subfamily. Monomer.

It catalyses the reaction 1-haloalkane + H2O = a halide anion + a primary alcohol + H(+). It participates in xenobiotic degradation; 1,2-dibromoethane degradation. Functionally, catalyzes hydrolytic cleavage of carbon-halogen bonds in halogenated aliphatic compounds, leading to the formation of the corresponding primary alcohols, halide ions and protons. Has a broad substrate specificity, which includes mono- and di-chlorinated and brominated alkanes. The highest activity was found with 1,2-dibromoethane, whereas low activity was measured with the analog 1,2-dichloroethane. The chain is Haloalkane dehalogenase (dhaAF) from Mycobacterium sp. (strain GP1).